Here is a 179-residue protein sequence, read N- to C-terminus: Dual-action ribosomal maturation protein DarP (179 aa).

It belongs to the DarP family.

It localises to the cytoplasm. Functionally, member of a network of 50S ribosomal subunit biogenesis factors which assembles along the 30S-50S interface, preventing incorrect 23S rRNA structures from forming. Promotes peptidyl transferase center (PTC) maturation. In Aliivibrio fischeri (strain ATCC 700601 / ES114) (Vibrio fischeri), this protein is Dual-action ribosomal maturation protein DarP.